The following is a 334-amino-acid chain: Holliday junction branch migration complex subunit RuvB (334 aa).

The segment at 4-184 is large ATPase domain (RuvB-L); it reads ADRLISAEPI…FGIVQRLEFY (181 aa). ATP contacts are provided by residues I23, R24, G65, K68, T69, T70, 131–133, R174, Y184, and R221; that span reads EDY. Mg(2+) is bound at residue T69. The segment at 185-255 is small ATPAse domain (RuvB-S); it reads QVADLQHIVS…VAMQALDMLN (71 aa). The interval 258-334 is head domain (RuvB-H); it reads AEGFDYMDRK…YKHFGMVREE (77 aa). Positions 294, 313, and 318 each coordinate DNA.

The protein belongs to the RuvB family. Homohexamer. Forms an RuvA(8)-RuvB(12)-Holliday junction (HJ) complex. HJ DNA is sandwiched between 2 RuvA tetramers; dsDNA enters through RuvA and exits via RuvB. An RuvB hexamer assembles on each DNA strand where it exits the tetramer. Each RuvB hexamer is contacted by two RuvA subunits (via domain III) on 2 adjacent RuvB subunits; this complex drives branch migration. In the full resolvosome a probable DNA-RuvA(4)-RuvB(12)-RuvC(2) complex forms which resolves the HJ.

It localises to the cytoplasm. It catalyses the reaction ATP + H2O = ADP + phosphate + H(+). The RuvA-RuvB-RuvC complex processes Holliday junction (HJ) DNA during genetic recombination and DNA repair, while the RuvA-RuvB complex plays an important role in the rescue of blocked DNA replication forks via replication fork reversal (RFR). RuvA specifically binds to HJ cruciform DNA, conferring on it an open structure. The RuvB hexamer acts as an ATP-dependent pump, pulling dsDNA into and through the RuvAB complex. RuvB forms 2 homohexamers on either side of HJ DNA bound by 1 or 2 RuvA tetramers; 4 subunits per hexamer contact DNA at a time. Coordinated motions by a converter formed by DNA-disengaged RuvB subunits stimulates ATP hydrolysis and nucleotide exchange. Immobilization of the converter enables RuvB to convert the ATP-contained energy into a lever motion, pulling 2 nucleotides of DNA out of the RuvA tetramer per ATP hydrolyzed, thus driving DNA branch migration. The RuvB motors rotate together with the DNA substrate, which together with the progressing nucleotide cycle form the mechanistic basis for DNA recombination by continuous HJ branch migration. Branch migration allows RuvC to scan DNA until it finds its consensus sequence, where it cleaves and resolves cruciform DNA. The chain is Holliday junction branch migration complex subunit RuvB from Serratia proteamaculans (strain 568).